A 253-amino-acid chain; its full sequence is Redox-sensing transcriptional repressor Rex (253 aa).

A DNA-binding region (H-T-H motif) is located at residues 26–65 (LYLRALTALSERSVPTVSSEELATAAGVNSAKLRKDFSYL). Position 100–105 (100–105 (GIGNLG)) interacts with NAD(+). The disordered stretch occupies residues 217–253 (RKAGEDSAAEDEGAPPMRATPASRKGPDGDMPAVMPA).

This sequence belongs to the transcriptional regulatory Rex family. In terms of assembly, homodimer.

Its subcellular location is the cytoplasm. Modulates transcription in response to changes in cellular NADH/NAD(+) redox state. The polypeptide is Redox-sensing transcriptional repressor Rex (Streptomyces griseus subsp. griseus (strain JCM 4626 / CBS 651.72 / NBRC 13350 / KCC S-0626 / ISP 5235)).